Consider the following 638-residue polypeptide: Chaperone protein DnaK (638 aa).

T197 is subject to Phosphothreonine; by autocatalysis. Positions 598–638 (QQSAPSGAAAGPDEGAPSGSGGTSGTRGGDDVIDAEFTETK) are disordered. Positions 615 to 624 (SGSGGTSGTR) are enriched in gly residues. Over residues 628-638 (DVIDAEFTETK) the composition is skewed to acidic residues.

The protein belongs to the heat shock protein 70 family.

In terms of biological role, acts as a chaperone. The sequence is that of Chaperone protein DnaK from Gloeobacter violaceus (strain ATCC 29082 / PCC 7421).